A 229-amino-acid polypeptide reads, in one-letter code: Matrix protein (229 aa).

Residues 1 to 10 (MSSLKKILGL) are compositionally biased toward low complexity. The disordered stretch occupies residues 1-23 (MSSLKKILGLKGKGKKSKKLGIA). Positions 2 to 4 (SSL) match the dynamin binding motif. A PPXY motif motif is present at residues 24 to 27 (PPPY). The PTAP/PSAP motif signature appears at 37 to 40 (PSAP).

It belongs to the vesiculoviruses matrix protein family. As to quaternary structure, homomultimer. Interacts with viral nucleocapsid; this interaction contributes to the virion assembly. Interacts with the viral envelope glycoprotein; this interaction contributes to the virion assembly. Interacts with host RAE1-NUP98 complex. Interacts with host NEDD4 and TSG101. Interacts with host dynamin. Interacts with host NDUFAF4; the interaction inhibits viral propagation and is independent of interferon activation. Interacts with host GTF2H5; the interaction may inhibit host transcription. Post-translationally, phosphorylated by host.

The protein localises to the virion. The protein resides in the host endomembrane system. It is found in the host nucleus membrane. Its subcellular location is the host nucleus. It localises to the host cytoplasm. Its function is as follows. Forms a double layer around the helical nucleocapsid, the inner matrix layer binding to the N helix and the outer matrix layer binding to the envelope glycoprotein. Plays a major role in assembly and budding of virion, by recruiting cellular partners of the ESCRT complexes that play a key role in releasing the budding particle from the host membrane. Condensates the ribonucleocapsid core during virus assembly. Inhibits the host mRNA nuclear export thereby inducing the shut off of cellular transcription and preventing the interferon signaling and the establishment of antiviral state in infected cells. This shutoff presumably inhibits interferon signaling and thus establishment of antiviral state in virus infected cells. Induces cell-rounding, cytoskeleton disorganization and apoptosis in infected cell. Inhibits host transcription, possibly through interaction with host DNA repair factor IIH/TFIIH GTF2H5 subunit. The polypeptide is Matrix protein (M) (Vesicular stomatitis Indiana virus (strain 85CLB South America) (VSIV)).